The following is a 1426-amino-acid chain: DNA-directed RNA polymerase subunit beta' (1426 aa).

4 residues coordinate Zn(2+): cysteine 71, cysteine 73, cysteine 86, and cysteine 89. Mg(2+) contacts are provided by aspartate 461, aspartate 463, and aspartate 465. Residues cysteine 814, cysteine 888, cysteine 895, and cysteine 898 each contribute to the Zn(2+) site. Positions 1392-1426 (ADPIAAAESAIGLGGGEQPATSETGAGGSDPSEEG) are disordered.

The protein belongs to the RNA polymerase beta' chain family. In terms of assembly, the RNAP catalytic core consists of 2 alpha, 1 beta, 1 beta' and 1 omega subunit. When a sigma factor is associated with the core the holoenzyme is formed, which can initiate transcription. Mg(2+) is required as a cofactor. Zn(2+) serves as cofactor.

It carries out the reaction RNA(n) + a ribonucleoside 5'-triphosphate = RNA(n+1) + diphosphate. In terms of biological role, DNA-dependent RNA polymerase catalyzes the transcription of DNA into RNA using the four ribonucleoside triphosphates as substrates. This chain is DNA-directed RNA polymerase subunit beta', found in Alkalilimnicola ehrlichii (strain ATCC BAA-1101 / DSM 17681 / MLHE-1).